A 46-amino-acid chain; its full sequence is Protein PsbN (46 aa).

The chain crosses the membrane as a helical span at residues 7 to 27 (ALSVAIGVLAVLLGMTGFGVY).

Belongs to the PsbN family.

The protein localises to the cellular thylakoid membrane. Functionally, may play a role in photosystem I and II biogenesis. This chain is Protein PsbN, found in Parasynechococcus marenigrum (strain WH8102).